The sequence spans 245 residues: DNA repair protein RecO (245 aa).

The protein belongs to the RecO family.

Functionally, involved in DNA repair and RecF pathway recombination. This is DNA repair protein RecO from Klebsiella pneumoniae subsp. pneumoniae (strain ATCC 700721 / MGH 78578).